A 248-amino-acid chain; its full sequence is Probable transcriptional regulatory protein Rsph17025_0577 (248 aa).

The disordered stretch occupies residues 1 to 21 (MAGHSKWANIQHRKGKQDKLR).

The protein belongs to the TACO1 family.

It is found in the cytoplasm. This is Probable transcriptional regulatory protein Rsph17025_0577 from Cereibacter sphaeroides (strain ATCC 17025 / ATH 2.4.3) (Rhodobacter sphaeroides).